A 647-amino-acid polypeptide reads, in one-letter code: Threonine--tRNA ligase (647 aa).

A TGS domain is found at 1–61 (MIKITFPDGA…EEDGSIEIVT (61 aa)). The interval 240–538 (DHRKLGKELD…LIETYKGAFP (299 aa)) is catalytic. Cys334, His385, and His515 together coordinate Zn(2+).

Belongs to the class-II aminoacyl-tRNA synthetase family. In terms of assembly, homodimer. Requires Zn(2+) as cofactor.

The protein resides in the cytoplasm. The enzyme catalyses tRNA(Thr) + L-threonine + ATP = L-threonyl-tRNA(Thr) + AMP + diphosphate + H(+). Functionally, catalyzes the attachment of threonine to tRNA(Thr) in a two-step reaction: L-threonine is first activated by ATP to form Thr-AMP and then transferred to the acceptor end of tRNA(Thr). Also edits incorrectly charged L-seryl-tRNA(Thr). The polypeptide is Threonine--tRNA ligase (Streptococcus pyogenes serotype M18 (strain MGAS8232)).